A 130-amino-acid chain; its full sequence is MAKRKIVKKKVVKKNIAKGIVYISATFNNTMVTVTDEMGNAIAWSSAGGLGFKGSKKSTPYAAQQAVEDALNKAKEHGIKEVGIKVQGPGSGRETAVKSVGAMEGIKVTFLKDITPLAHNGCRPPKRRRV.

The protein belongs to the universal ribosomal protein uS11 family. As to quaternary structure, part of the 30S ribosomal subunit. Interacts with proteins S7 and S18. Binds to IF-3.

Its function is as follows. Located on the platform of the 30S subunit, it bridges several disparate RNA helices of the 16S rRNA. Forms part of the Shine-Dalgarno cleft in the 70S ribosome. This is Small ribosomal subunit protein uS11 from Campylobacter jejuni subsp. jejuni serotype O:6 (strain 81116 / NCTC 11828).